We begin with the raw amino-acid sequence, 347 residues long: MKMEEMSLSGLDNSKLEAIAQEIYADLVEDSCLGFCFEVHRAVKCGYFFLDDTDPDSMKDFEIVDQPGLDIFGQVFNQWKSKECVCPNCSRSIAASRFAPHLEKCLGMGRNSSRIANRRIANSNNMNKSESDQEDNDDINDNDWSYGSEKKAKKRKSDKNPNSPRRSKSLKHKNGELSNSDPFKYSNSTGISYETLGPEELRSLLTTQCGVISEHTKKMCTRSLRCPQHTDEQRRTVRIYFLGPSAVLPEVESSLDNDGFDMTDSQALISRLQWDGSSDLSPSDSGSSKTSENQGWGLGTNSSESRKTKKKKSHLSLVGTASGLGSNKKKKPKPPAPPTPSIYDDIN.

The SGF11-type zinc-finger motif lies at 84-105 (CVCPNCSRSIAASRFAPHLEKC). Positions 116–125 (ANRRIANSNN) are enriched in low complexity. The segment at 116–184 (ANRRIANSNN…GELSNSDPFK (69 aa)) is disordered. Residues Ser129 and Ser131 each carry the phosphoserine modification. A compositionally biased stretch (acidic residues) spans 132–141 (DQEDNDDIND). One can recognise an SCA7 domain in the interval 196-263 (LGPEELRSLL…SLDNDGFDMT (68 aa)). Residues 275–288 (DGSSDLSPSDSGSS) show a composition bias toward low complexity. A disordered region spans residues 275–347 (DGSSDLSPSD…PTPSIYDDIN (73 aa)). Residues Ser278, Ser281, and Ser326 each carry the phosphoserine modification.

The protein belongs to the SGF11 family. Component of some SAGA transcription coactivator-HAT complexes, at least composed of ATXN7, ATXN7L3, ENY2, GCN5L2, SUPT3H, TAF10, TRRAP and USP22. Within the SAGA complex, ENY2, ATXN7, ATXN7L3, and USP22 form an additional subcomplex of SAGA called the DUB module (deubiquitination module). Interacts directly with ENY2 and USP22.

Its subcellular location is the nucleus. Functionally, component of the transcription regulatory histone acetylation (HAT) complex SAGA, a multiprotein complex that activates transcription by remodeling chromatin and mediating histone acetylation and deubiquitination. Within the SAGA complex, participates in a subcomplex that specifically deubiquitinates both histones H2A and H2B. The SAGA complex is recruited to specific gene promoters by activators such as MYC, where it is required for transcription. Required for nuclear receptor-mediated transactivation. Within the complex, it is required to recruit USP22 and ENY2 into the SAGA complex. Regulates H2B monoubiquitination (H2Bub1) levels. Affects subcellular distribution of ENY2, USP22 and ATXN7L3B. The sequence is that of Ataxin-7-like protein 3 (Atxn7l3) from Mus musculus (Mouse).